We begin with the raw amino-acid sequence, 164 residues long: MTYRVCFVCTGNICRSPMAEAVFRARVEDAGLGHLVEADSAGTGGWHEGEGADPRTEAVLADHGYGLDHAARQFQQSWFSRLDLVVALDAGHLRALRRLAPTERDAAKVRLLRSYDPAVAGGDLDVPDPYYGGRDGFEECLEMVEAASTGLLAAVREQVEGRAA.

The active-site Nucleophile is Cys9. Arg15 is a catalytic residue. Asp128 serves as the catalytic Proton donor.

It belongs to the low molecular weight phosphotyrosine protein phosphatase family.

The catalysed reaction is O-phospho-L-tyrosyl-[protein] + H2O = L-tyrosyl-[protein] + phosphate. In terms of biological role, acts on tyrosine phosphorylated proteins, low-MW aryl phosphates and natural and synthetic acyl phosphates. May be involved in the regulation of sulfur amino acid metabolism. This chain is Low molecular weight protein-tyrosine-phosphatase (ptpA), found in Streptomyces coelicolor (strain ATCC BAA-471 / A3(2) / M145).